A 193-amino-acid polypeptide reads, in one-letter code: Molybdenum cofactor guanylyltransferase (193 aa).

GTP is bound by residues 8–10 (LAG), Lys21, Asp67, and Asp98. Asp98 is a Mg(2+) binding site.

It belongs to the MobA family. In terms of assembly, monomer. The cofactor is Mg(2+).

It localises to the cytoplasm. The enzyme catalyses Mo-molybdopterin + GTP + H(+) = Mo-molybdopterin guanine dinucleotide + diphosphate. Its function is as follows. Transfers a GMP moiety from GTP to Mo-molybdopterin (Mo-MPT) cofactor (Moco or molybdenum cofactor) to form Mo-molybdopterin guanine dinucleotide (Mo-MGD) cofactor. This is Molybdenum cofactor guanylyltransferase from Cereibacter sphaeroides (strain ATCC 17023 / DSM 158 / JCM 6121 / CCUG 31486 / LMG 2827 / NBRC 12203 / NCIMB 8253 / ATH 2.4.1.) (Rhodobacter sphaeroides).